The primary structure comprises 312 residues: Ribosomal RNA small subunit methyltransferase H (312 aa).

Residues 33-35, Asp-52, Phe-81, Asp-102, and Gln-109 each bind S-adenosyl-L-methionine; that span reads GGH.

Belongs to the methyltransferase superfamily. RsmH family.

The protein localises to the cytoplasm. The catalysed reaction is cytidine(1402) in 16S rRNA + S-adenosyl-L-methionine = N(4)-methylcytidine(1402) in 16S rRNA + S-adenosyl-L-homocysteine + H(+). Specifically methylates the N4 position of cytidine in position 1402 (C1402) of 16S rRNA. In Leuconostoc mesenteroides subsp. mesenteroides (strain ATCC 8293 / DSM 20343 / BCRC 11652 / CCM 1803 / JCM 6124 / NCDO 523 / NBRC 100496 / NCIMB 8023 / NCTC 12954 / NRRL B-1118 / 37Y), this protein is Ribosomal RNA small subunit methyltransferase H.